The chain runs to 200 residues: Matrix protein (200 aa).

As to quaternary structure, homomultimer. Interacts with viral nucleocapsid.

Its subcellular location is the virion membrane. The protein localises to the host endomembrane system. It is found in the host nucleus membrane. Its function is as follows. Plays a major role in assembly and budding of virion, by recruiting cellular partners of the ESCRT complexes that play a key role in releasing the budding particle from the host membrane. Condensates the ribonucleocapsid core during virus assembly. The sequence is that of Matrix protein (M) from Tupaia (TUPV).